A 118-amino-acid chain; its full sequence is Putative pterin-4-alpha-carbinolamine dehydratase (118 aa).

It belongs to the pterin-4-alpha-carbinolamine dehydratase family.

It carries out the reaction (4aS,6R)-4a-hydroxy-L-erythro-5,6,7,8-tetrahydrobiopterin = (6R)-L-erythro-6,7-dihydrobiopterin + H2O. This is Putative pterin-4-alpha-carbinolamine dehydratase from Stutzerimonas stutzeri (strain A1501) (Pseudomonas stutzeri).